The primary structure comprises 602 residues: ATP-dependent lipid A-core flippase 1 (602 aa).

The next 5 membrane-spanning stretches (helical) occupy residues 36–56, 80–100, 154–174, 176–196, and 261–281; these read LGFVAAIIGMLGYAAIDVYFL, LFIIVAFTVRGIAHFIANYCL, ILTIVQQSAFIIGLLGLMFYY, WQLSLIFLLITPIIAVIVSVV, and ASVPIIQVIASFALAFVFYAI. Positions 39–321 constitute an ABC transmembrane type-1 domain; that stretch reads VAAIIGMLGY…LTNVNSEFQQ (283 aa). One can recognise an ABC transporter domain in the interval 362 to 599; sequence YKNTNTMTTS…QGAYAQLHSF (238 aa). Residue 398-405 coordinates ATP; the sequence is GRSGSGKS.

The protein belongs to the ABC transporter superfamily. Lipid exporter (TC 3.A.1.106) family. In terms of assembly, homodimer.

It is found in the cell inner membrane. The enzyme catalyses ATP + H2O + lipid A-core oligosaccharideSide 1 = ADP + phosphate + lipid A-core oligosaccharideSide 2.. Involved in lipopolysaccharide (LPS) biosynthesis. Translocates lipid A-core from the inner to the outer leaflet of the inner membrane. Transmembrane domains (TMD) form a pore in the inner membrane and the ATP-binding domain (NBD) is responsible for energy generation. The polypeptide is ATP-dependent lipid A-core flippase 1 (Colwellia psychrerythraea (strain 34H / ATCC BAA-681) (Vibrio psychroerythus)).